The primary structure comprises 395 residues: Chorismate synthase (395 aa).

NADP(+) contacts are provided by R40 and R46. Residues 135-137 (RAS) and 256-257 (QA) contribute to the FMN site. The segment covering 272–283 (RRGSQAHDEMRP) has biased composition (basic and acidic residues). Residues 272-296 (RRGSQAHDEMRPGPDGILRSTNRAG) are disordered. FMN is bound by residues G300, 315–319 (KPIST), and R341.

This sequence belongs to the chorismate synthase family. As to quaternary structure, homotetramer. Requires FMNH2 as cofactor.

It carries out the reaction 5-O-(1-carboxyvinyl)-3-phosphoshikimate = chorismate + phosphate. The protein operates within metabolic intermediate biosynthesis; chorismate biosynthesis; chorismate from D-erythrose 4-phosphate and phosphoenolpyruvate: step 7/7. Its function is as follows. Catalyzes the anti-1,4-elimination of the C-3 phosphate and the C-6 proR hydrogen from 5-enolpyruvylshikimate-3-phosphate (EPSP) to yield chorismate, which is the branch point compound that serves as the starting substrate for the three terminal pathways of aromatic amino acid biosynthesis. This reaction introduces a second double bond into the aromatic ring system. The sequence is that of Chorismate synthase from Rhodococcus jostii (strain RHA1).